The following is a 134-amino-acid chain: Profilin-3 (134 aa).

The cysteines at positions 13 and 118 are disulfide-linked. Positions 84–100 (AVIRGKKGSGGITIKKT) match the Involved in PIP2 interaction motif. T114 is modified (phosphothreonine).

The protein belongs to the profilin family. In terms of assembly, occurs in many kinds of cells as a complex with monomeric actin in a 1:1 ratio. Phosphorylated by MAP kinases.

It localises to the cytoplasm. The protein localises to the cytoskeleton. Its function is as follows. Binds to actin and affects the structure of the cytoskeleton. At high concentrations, profilin prevents the polymerization of actin, whereas it enhances it at low concentrations. This Olea europaea (Common olive) protein is Profilin-3.